Here is a 290-residue protein sequence, read N- to C-terminus: Glutaredoxin domain-containing cysteine-rich protein 1 (290 aa).

A Glutaredoxin domain is found at 127–234 (LQQPSADLEF…DLLTKIERVQ (108 aa)).

It belongs to the GRXCR1 family. In the inner ear, expressed predominantly in sensory hair cells and their stereocilia bundles with higher levels in outer hair cells (OHC) at P1 and in inner hair cells (IHC) at P5. At P1, expression is prominent in each row of stereocilia within bundles including immature shorter stereocilia. Expression is also observed in apical microvilli of sensory cells at P1 and in kinocilia at P1 and P5. In the adult, expression is localized throughout the length of the stereocilia of both OHC and IHC (at protein level).

It is found in the cell projection. The protein localises to the stereocilium. It localises to the microvillus. The protein resides in the kinocilium. Its function is as follows. May play a role in actin filament architecture in developing stereocilia of sensory cells. The sequence is that of Glutaredoxin domain-containing cysteine-rich protein 1 (Grxcr1) from Mus musculus (Mouse).